The chain runs to 446 residues: Phosphoglucosamine mutase (446 aa).

The Phosphoserine intermediate role is filled by Ser101. Positions 101, 240, 242, and 244 each coordinate Mg(2+). At Ser101 the chain carries Phosphoserine.

This sequence belongs to the phosphohexose mutase family. It depends on Mg(2+) as a cofactor. In terms of processing, activated by phosphorylation.

It carries out the reaction alpha-D-glucosamine 1-phosphate = D-glucosamine 6-phosphate. Functionally, catalyzes the conversion of glucosamine-6-phosphate to glucosamine-1-phosphate. This is Phosphoglucosamine mutase from Pseudomonas putida (strain ATCC 47054 / DSM 6125 / CFBP 8728 / NCIMB 11950 / KT2440).